Consider the following 228-residue polypeptide: Tol-Pal system protein TolQ (228 aa).

3 helical membrane-spanning segments follow: residues 16-36 (IVVQLVIVILISFSIISWAII), 137-157 (VSPYIGLFGTVWGIMHAFMAL), and 172-192 (IAEALIATAIGLFAAIPAVMA).

This sequence belongs to the ExbB/TolQ family. The Tol-Pal system is composed of five core proteins: the inner membrane proteins TolA, TolQ and TolR, the periplasmic protein TolB and the outer membrane protein Pal. They form a network linking the inner and outer membranes and the peptidoglycan layer.

The protein resides in the cell inner membrane. Part of the Tol-Pal system, which plays a role in outer membrane invagination during cell division and is important for maintaining outer membrane integrity. This chain is Tol-Pal system protein TolQ, found in Haemophilus influenzae (strain ATCC 51907 / DSM 11121 / KW20 / Rd).